Reading from the N-terminus, the 879-residue chain is Alanine--tRNA ligase (879 aa).

Residues His-566, His-570, Cys-668, and His-672 each coordinate Zn(2+).

The protein belongs to the class-II aminoacyl-tRNA synthetase family. Zn(2+) is required as a cofactor.

It is found in the cytoplasm. The catalysed reaction is tRNA(Ala) + L-alanine + ATP = L-alanyl-tRNA(Ala) + AMP + diphosphate. Functionally, catalyzes the attachment of alanine to tRNA(Ala) in a two-step reaction: alanine is first activated by ATP to form Ala-AMP and then transferred to the acceptor end of tRNA(Ala). Also edits incorrectly charged Ser-tRNA(Ala) and Gly-tRNA(Ala) via its editing domain. This chain is Alanine--tRNA ligase, found in Clostridium tetani (strain Massachusetts / E88).